Reading from the N-terminus, the 279-residue chain is Pantothenate synthetase (279 aa).

26 to 33 contacts ATP; sequence MGNLHEGH. His33 acts as the Proton donor in catalysis. Gln57 contacts (R)-pantoate. Gln57 is a beta-alanine binding site. Residue 144 to 147 participates in ATP binding; that stretch reads GKKD. Residue Gln150 coordinates (R)-pantoate. ATP-binding positions include Val173 and 181–184; that span reads LSSR.

The protein belongs to the pantothenate synthetase family. Homodimer.

Its subcellular location is the cytoplasm. It catalyses the reaction (R)-pantoate + beta-alanine + ATP = (R)-pantothenate + AMP + diphosphate + H(+). The protein operates within cofactor biosynthesis; (R)-pantothenate biosynthesis; (R)-pantothenate from (R)-pantoate and beta-alanine: step 1/1. Catalyzes the condensation of pantoate with beta-alanine in an ATP-dependent reaction via a pantoyl-adenylate intermediate. The chain is Pantothenate synthetase from Burkholderia lata (strain ATCC 17760 / DSM 23089 / LMG 22485 / NCIMB 9086 / R18194 / 383).